We begin with the raw amino-acid sequence, 309 residues long: ADP-L-glycero-D-manno-heptose-6-epimerase (309 aa).

NADP(+) is bound by residues 10–11 (MI), 31–32 (DN), Lys38, Lys53, 75–79 (EGACS), and Asn92. Residue Tyr139 is the Proton acceptor of the active site. NADP(+) is bound at residue Lys143. Asn168 provides a ligand contact to substrate. The NADP(+) site is built by Val169 and Lys177. The Proton acceptor role is filled by Lys177. Substrate is bound by residues Ser179, His186, 200 to 203 (FDGS), Arg208, and Tyr271.

Belongs to the NAD(P)-dependent epimerase/dehydratase family. HldD subfamily. Homopentamer. NADP(+) serves as cofactor.

It carries out the reaction ADP-D-glycero-beta-D-manno-heptose = ADP-L-glycero-beta-D-manno-heptose. It functions in the pathway nucleotide-sugar biosynthesis; ADP-L-glycero-beta-D-manno-heptose biosynthesis; ADP-L-glycero-beta-D-manno-heptose from D-glycero-beta-D-manno-heptose 7-phosphate: step 4/4. Functionally, catalyzes the interconversion between ADP-D-glycero-beta-D-manno-heptose and ADP-L-glycero-beta-D-manno-heptose via an epimerization at carbon 6 of the heptose. This is ADP-L-glycero-D-manno-heptose-6-epimerase from Serratia proteamaculans (strain 568).